The chain runs to 292 residues: MENNIENFDPSLVYFGDRGQDFKKMIRSILSLGMSDEYIPYLTTPESLNTYNTAFTSRGADDKNNYEMFEQLGDVSVNKFIVNYMYKRFPQLRNPNGVDVVAKLKIKYASKNQLQMLSESLDMWRFITATYDERTNKKKPLLEDTFESFFGATEWLIDSFIEDIALKQGNNNTYVGVGYNIINGILTTLFDRINISLKYENLVDAKTRFNEVIAEQKSIIGDVKYEDEYKNGKHTSKIYRYPPNSNLKELLGIGTGTLKRDAQEQAASRALETLALKHNIIKEAPDRFKAFM.

The RNase III domain maps to 32-158 (LGMSDEYIPY…FFGATEWLID (127 aa)). Residues 204 to 276 (DAKTRFNEVI…ASRALETLAL (73 aa)) form the DRBM domain.

This sequence belongs to the IIV-6 142R family.

The enzyme catalyses Endonucleolytic cleavage to 5'-phosphomonoester.. Digests double-stranded RNA. The chain is Putative ribonuclease 3 from Acheta domesticus (House cricket).